The following is a 580-amino-acid chain: Probable RNA-binding protein CG14230 (580 aa).

Residues Thr-4–Glu-81 enclose the RRM domain. A compositionally biased stretch (basic and acidic residues) spans Arg-89–Gly-100. Disordered stretches follow at residues Arg-89–Glu-131 and Gln-173–Ile-211. The segment covering Pro-110–Gln-120 has biased composition (polar residues). Ser-231 is subject to Phosphoserine. 2 stretches are compositionally biased toward acidic residues: residues Glu-254–Gln-263 and Asn-298–Glu-313. Disordered regions lie at residues Glu-254–Arg-316, Ser-333–Ser-395, and Pro-463–Asn-520. Basic and acidic residues-rich tracts occupy residues Leu-348–Gln-358 and Gln-365–Ser-377. Residues Ala-386 to Ser-395 are compositionally biased toward polar residues. The residue at position 468 (Ser-468) is a Phosphoserine. At Thr-475 the chain carries Phosphothreonine.

This Drosophila melanogaster (Fruit fly) protein is Probable RNA-binding protein CG14230.